The primary structure comprises 509 residues: Maturase K (509 aa).

Belongs to the intron maturase 2 family. MatK subfamily.

It is found in the plastid. The protein localises to the chloroplast. Functionally, usually encoded in the trnK tRNA gene intron. Probably assists in splicing its own and other chloroplast group II introns. In Nicotiana sylvestris (Wood tobacco), this protein is Maturase K.